Reading from the N-terminus, the 239-residue chain is Orotidine 5'-phosphate decarboxylase (239 aa).

Residues D10, K33, 60–69, T124, R186, Q195, G215, and R216 contribute to the substrate site; that span reads DLKLYDIPNT. The active-site Proton donor is K62.

This sequence belongs to the OMP decarboxylase family. Type 1 subfamily. In terms of assembly, homodimer.

It carries out the reaction orotidine 5'-phosphate + H(+) = UMP + CO2. The protein operates within pyrimidine metabolism; UMP biosynthesis via de novo pathway; UMP from orotate: step 2/2. Its function is as follows. Catalyzes the decarboxylation of orotidine 5'-monophosphate (OMP) to uridine 5'-monophosphate (UMP). In Latilactobacillus sakei subsp. sakei (strain 23K) (Lactobacillus sakei subsp. sakei), this protein is Orotidine 5'-phosphate decarboxylase.